We begin with the raw amino-acid sequence, 143 residues long: Nucleoside diphosphate kinase (143 aa).

ATP contacts are provided by lysine 11, phenylalanine 59, arginine 87, threonine 93, arginine 104, and asparagine 114. Histidine 117 acts as the Pros-phosphohistidine intermediate in catalysis.

This sequence belongs to the NDK family. In terms of assembly, homotetramer. Mg(2+) serves as cofactor.

The protein resides in the cytoplasm. The enzyme catalyses a 2'-deoxyribonucleoside 5'-diphosphate + ATP = a 2'-deoxyribonucleoside 5'-triphosphate + ADP. It catalyses the reaction a ribonucleoside 5'-diphosphate + ATP = a ribonucleoside 5'-triphosphate + ADP. Its function is as follows. Major role in the synthesis of nucleoside triphosphates other than ATP. The ATP gamma phosphate is transferred to the NDP beta phosphate via a ping-pong mechanism, using a phosphorylated active-site intermediate. This chain is Nucleoside diphosphate kinase, found in Shewanella halifaxensis (strain HAW-EB4).